The following is a 289-amino-acid chain: Shikimate dehydrogenase (NADP(+)) (289 aa).

Residues 22 to 24 (SRS) and Thr69 each bind shikimate. Lys73 serves as the catalytic Proton acceptor. Glu85 lines the NADP(+) pocket. Asn94 and Asp109 together coordinate shikimate. NADP(+) is bound by residues 134–138 (GAGGA), 158–163 (NRTLSR), and Ile226. Tyr228 contributes to the shikimate binding site. Residue Gly249 coordinates NADP(+).

It belongs to the shikimate dehydrogenase family. Homodimer.

It carries out the reaction shikimate + NADP(+) = 3-dehydroshikimate + NADPH + H(+). The protein operates within metabolic intermediate biosynthesis; chorismate biosynthesis; chorismate from D-erythrose 4-phosphate and phosphoenolpyruvate: step 4/7. In terms of biological role, involved in the biosynthesis of the chorismate, which leads to the biosynthesis of aromatic amino acids. Catalyzes the reversible NADPH linked reduction of 3-dehydroshikimate (DHSA) to yield shikimate (SA). The chain is Shikimate dehydrogenase (NADP(+)) from Brucella melitensis biotype 2 (strain ATCC 23457).